A 377-amino-acid polypeptide reads, in one-letter code: Queuine tRNA-ribosyltransferase (377 aa).

The active-site Proton acceptor is the Asp89. Residues 89-93 (DSGGF), Asp143, Gln187, and Gly214 contribute to the substrate site. The RNA binding stretch occupies residues 245-251 (GVGKPED). Residue Asp264 is the Nucleophile of the active site. The tract at residues 269 to 273 (TRNAR) is RNA binding; important for wobble base 34 recognition. Positions 302, 304, 307, and 333 each coordinate Zn(2+).

The protein belongs to the queuine tRNA-ribosyltransferase family. As to quaternary structure, homodimer. Within each dimer, one monomer is responsible for RNA recognition and catalysis, while the other monomer binds to the replacement base PreQ1. Requires Zn(2+) as cofactor.

The enzyme catalyses 7-aminomethyl-7-carbaguanine + guanosine(34) in tRNA = 7-aminomethyl-7-carbaguanosine(34) in tRNA + guanine. Its pathway is tRNA modification; tRNA-queuosine biosynthesis. Functionally, catalyzes the base-exchange of a guanine (G) residue with the queuine precursor 7-aminomethyl-7-deazaguanine (PreQ1) at position 34 (anticodon wobble position) in tRNAs with GU(N) anticodons (tRNA-Asp, -Asn, -His and -Tyr). Catalysis occurs through a double-displacement mechanism. The nucleophile active site attacks the C1' of nucleotide 34 to detach the guanine base from the RNA, forming a covalent enzyme-RNA intermediate. The proton acceptor active site deprotonates the incoming PreQ1, allowing a nucleophilic attack on the C1' of the ribose to form the product. After dissociation, two additional enzymatic reactions on the tRNA convert PreQ1 to queuine (Q), resulting in the hypermodified nucleoside queuosine (7-(((4,5-cis-dihydroxy-2-cyclopenten-1-yl)amino)methyl)-7-deazaguanosine). This chain is Queuine tRNA-ribosyltransferase, found in Shewanella piezotolerans (strain WP3 / JCM 13877).